The chain runs to 189 residues: Peptidyl-tRNA hydrolase (189 aa).

H15 is a tRNA binding site. The active-site Proton acceptor is H20. Residues F66, N68, and N114 each coordinate tRNA.

The protein belongs to the PTH family. Monomer.

The protein resides in the cytoplasm. It catalyses the reaction an N-acyl-L-alpha-aminoacyl-tRNA + H2O = an N-acyl-L-amino acid + a tRNA + H(+). Its function is as follows. Hydrolyzes ribosome-free peptidyl-tRNAs (with 1 or more amino acids incorporated), which drop off the ribosome during protein synthesis, or as a result of ribosome stalling. Functionally, catalyzes the release of premature peptidyl moieties from peptidyl-tRNA molecules trapped in stalled 50S ribosomal subunits, and thus maintains levels of free tRNAs and 50S ribosomes. The polypeptide is Peptidyl-tRNA hydrolase (Streptococcus equi subsp. equi (strain 4047)).